Reading from the N-terminus, the 127-residue chain is Large ribosomal subunit protein bL19 (127 aa).

This sequence belongs to the bacterial ribosomal protein bL19 family.

This protein is located at the 30S-50S ribosomal subunit interface and may play a role in the structure and function of the aminoacyl-tRNA binding site. This chain is Large ribosomal subunit protein bL19, found in Synechococcus sp. (strain JA-3-3Ab) (Cyanobacteria bacterium Yellowstone A-Prime).